A 286-amino-acid chain; its full sequence is Energy-coupling factor transporter ATP-binding protein EcfA2 (286 aa).

The region spanning 3 to 246 (IRFDNVSYTY…KEKLADWHIA (244 aa)) is the ABC transporter domain. 40 to 47 (GQTGSGKS) provides a ligand contact to ATP.

Belongs to the ABC transporter superfamily. Energy-coupling factor EcfA family. Forms a stable energy-coupling factor (ECF) transporter complex composed of 2 membrane-embedded substrate-binding proteins (S component), 2 ATP-binding proteins (A component) and 2 transmembrane proteins (T component).

It is found in the cell membrane. In terms of biological role, ATP-binding (A) component of a common energy-coupling factor (ECF) ABC-transporter complex. Unlike classic ABC transporters this ECF transporter provides the energy necessary to transport a number of different substrates. The polypeptide is Energy-coupling factor transporter ATP-binding protein EcfA2 (Staphylococcus aureus (strain bovine RF122 / ET3-1)).